Consider the following 175-residue polypeptide: Co-chaperone protein HscB homolog (175 aa).

The region spanning 2-74 is the J domain; sequence NYFQLFNIEV…LQRAEYILVQ (73 aa).

It belongs to the HscB family. In terms of assembly, interacts with HscA and stimulates its ATPase activity.

Co-chaperone involved in the maturation of iron-sulfur cluster-containing proteins. Seems to help targeting proteins to be folded toward HscA. This is Co-chaperone protein HscB homolog from Colwellia psychrerythraea (strain 34H / ATCC BAA-681) (Vibrio psychroerythus).